Here is a 358-residue protein sequence, read N- to C-terminus: Membrane-bound lytic murein transglycosylase C (358 aa).

The signal sequence occupies residues 1-16; the sequence is MKKILALLVIAPLLVS. Residue Cys17 is the site of N-palmitoyl cysteine attachment. Cys17 is lipidated: S-diacylglycerol cysteine.

Belongs to the transglycosylase Slt family.

It localises to the cell outer membrane. The catalysed reaction is Exolytic cleavage of the (1-&gt;4)-beta-glycosidic linkage between N-acetylmuramic acid (MurNAc) and N-acetylglucosamine (GlcNAc) residues in peptidoglycan, from either the reducing or the non-reducing ends of the peptidoglycan chains, with concomitant formation of a 1,6-anhydrobond in the MurNAc residue.. Its function is as follows. Murein-degrading enzyme. May play a role in recycling of muropeptides during cell elongation and/or cell division. In Yersinia enterocolitica serotype O:8 / biotype 1B (strain NCTC 13174 / 8081), this protein is Membrane-bound lytic murein transglycosylase C.